The primary structure comprises 343 residues: S-adenosylmethionine:tRNA ribosyltransferase-isomerase (343 aa).

The protein belongs to the QueA family. In terms of assembly, monomer.

It is found in the cytoplasm. It carries out the reaction 7-aminomethyl-7-carbaguanosine(34) in tRNA + S-adenosyl-L-methionine = epoxyqueuosine(34) in tRNA + adenine + L-methionine + 2 H(+). The protein operates within tRNA modification; tRNA-queuosine biosynthesis. In terms of biological role, transfers and isomerizes the ribose moiety from AdoMet to the 7-aminomethyl group of 7-deazaguanine (preQ1-tRNA) to give epoxyqueuosine (oQ-tRNA). The chain is S-adenosylmethionine:tRNA ribosyltransferase-isomerase from Stenotrophomonas maltophilia (strain R551-3).